Here is a 102-residue protein sequence, read N- to C-terminus: MSAQRIRIKLRSYDHRLLDQSAKRIVEVAKRTGAKVAGPIPLPTDRRVYCVTRSPHIDKDSREHFEIKMHKRLIDIIDPTQETVSNLMSLELPAGVDIHLKL.

The protein belongs to the universal ribosomal protein uS10 family. Part of the 30S ribosomal subunit.

Its function is as follows. Involved in the binding of tRNA to the ribosomes. This chain is Small ribosomal subunit protein uS10, found in Coprothermobacter proteolyticus (strain ATCC 35245 / DSM 5265 / OCM 4 / BT).